A 161-amino-acid polypeptide reads, in one-letter code: TRAF-interacting protein with FHA domain-containing protein B (161 aa).

An FHA domain is found at Leu-36 to Leu-91.

As to quaternary structure, interacts with TIFA.

Its function is as follows. Inhibits TIFA-mediated TRAF6 activation possibly by inducing a conformational change in TIFA. The polypeptide is TRAF-interacting protein with FHA domain-containing protein B (Homo sapiens (Human)).